The following is a 424-amino-acid chain: FeMo cofactor biosynthesis protein NifB (424 aa).

The Radical SAM core domain occupies 12 to 261 (NDSSRHTYGR…PQMKHCARCR (250 aa)). 3 residues coordinate [4Fe-4S] cluster: C30, C34, and C37. G84, T136, and V188 together coordinate S-adenosyl-L-methionine. The [4Fe-4S] cluster site is built by C257 and C260.

Belongs to the radical SAM superfamily. NifB family. Monomer. Requires [4Fe-4S] cluster as cofactor.

The protein operates within cofactor biosynthesis; Fe-Mo cofactor biosynthesis. Its function is as follows. Involved in the biosynthesis of the iron-molybdenum cofactor (FeMo-co or M-cluster) found in the dinitrogenase enzyme of the nitrogenase complex in nitrogen-fixing microorganisms. NifB catalyzes the crucial step of radical SAM-dependent carbide insertion that occurs concomitant with the insertion of a 9th sulfur and the rearrangement/coupling of two [4Fe-4S] clusters into a [8Fe-9S-C] cluster, the precursor to the M-cluster. The polypeptide is FeMo cofactor biosynthesis protein NifB (Chlorobaculum tepidum (strain ATCC 49652 / DSM 12025 / NBRC 103806 / TLS) (Chlorobium tepidum)).